A 231-amino-acid polypeptide reads, in one-letter code: 5'-methylthioadenosine/S-adenosylhomocysteine nucleosidase (231 aa).

Glu12 (proton acceptor) is an active-site residue. Residues Gly78, Val153, and 174–175 (ME) contribute to the substrate site. The active-site Proton donor is Asp198.

The protein belongs to the PNP/UDP phosphorylase family. MtnN subfamily.

The enzyme catalyses S-adenosyl-L-homocysteine + H2O = S-(5-deoxy-D-ribos-5-yl)-L-homocysteine + adenine. It carries out the reaction S-methyl-5'-thioadenosine + H2O = 5-(methylsulfanyl)-D-ribose + adenine. The catalysed reaction is 5'-deoxyadenosine + H2O = 5-deoxy-D-ribose + adenine. Its pathway is amino-acid biosynthesis; L-methionine biosynthesis via salvage pathway; S-methyl-5-thio-alpha-D-ribose 1-phosphate from S-methyl-5'-thioadenosine (hydrolase route): step 1/2. Functionally, catalyzes the irreversible cleavage of the glycosidic bond in both 5'-methylthioadenosine (MTA) and S-adenosylhomocysteine (SAH/AdoHcy) to adenine and the corresponding thioribose, 5'-methylthioribose and S-ribosylhomocysteine, respectively. Also cleaves 5'-deoxyadenosine, a toxic by-product of radical S-adenosylmethionine (SAM) enzymes, into 5-deoxyribose and adenine. This Aliivibrio fischeri (strain MJ11) (Vibrio fischeri) protein is 5'-methylthioadenosine/S-adenosylhomocysteine nucleosidase.